The primary structure comprises 73 residues: Protein SlyX homolog (73 aa).

It belongs to the SlyX family.

The protein is Protein SlyX homolog of Pasteurella multocida (strain Pm70).